The sequence spans 468 residues: 6-phospho-beta-galactosidase (468 aa).

D-galactose 6-phosphate contacts are provided by glutamine 19, histidine 116, asparagine 159, glutamate 160, and asparagine 297. Glutamate 160 acts as the Proton donor in catalysis. Glutamate 375 (nucleophile) is an active-site residue. The D-galactose 6-phosphate site is built by serine 428, tryptophan 429, lysine 435, and tyrosine 437.

Belongs to the glycosyl hydrolase 1 family.

The enzyme catalyses a 6-phospho-beta-D-galactoside + H2O = D-galactose 6-phosphate + an alcohol. It functions in the pathway carbohydrate metabolism; lactose degradation; D-galactose 6-phosphate and beta-D-glucose from lactose 6-phosphate: step 1/1. The polypeptide is 6-phospho-beta-galactosidase (Streptococcus mutans serotype c (strain ATCC 700610 / UA159)).